A 479-amino-acid polypeptide reads, in one-letter code: D-alanyl-D-alanine carboxypeptidase DacB (479 aa).

Residues 1–26 form the signal peptide; sequence MKKLSSISTALGSFLLSVSFSLPTFA. S69 (acyl-ester intermediate) is an active-site residue. The active-site Proton acceptor is the K72. The active site involves S310. Residue K420 participates in substrate binding.

It belongs to the peptidase S13 family.

It localises to the periplasm. The catalysed reaction is Preferential cleavage: (Ac)2-L-Lys-D-Ala-|-D-Ala. Also transpeptidation of peptidyl-alanyl moieties that are N-acyl substituents of D-alanine.. It participates in cell wall biogenesis; peptidoglycan biosynthesis. In terms of biological role, not involved in transpeptidation but exclusively catalyzes a DD-carboxypeptidase and DD-endopeptidase reaction. This chain is D-alanyl-D-alanine carboxypeptidase DacB (dacB), found in Haemophilus influenzae (strain ATCC 51907 / DSM 11121 / KW20 / Rd).